Consider the following 610-residue polypeptide: Peptidyl-prolyl cis-trans isomerase 9 (610 aa).

At S13 the chain carries Phosphoserine. 3 WD repeats span residues 45-83 (MHNA…VEYI), 88-127 (AHNA…LVNI), and 177-216 (KHTA…QKPD). In terms of domain architecture, PPIase cyclophilin-type spans 453-607 (LGKAAIIHTT…EPTKIINISI (155 aa)).

The protein belongs to the cyclophilin-type PPIase family.

The protein resides in the nucleus. It carries out the reaction [protein]-peptidylproline (omega=180) = [protein]-peptidylproline (omega=0). Its function is as follows. PPIases accelerate the folding of proteins. It catalyzes the cis-trans isomerization of proline imidic peptide bonds in oligopeptides. The protein is Peptidyl-prolyl cis-trans isomerase 9 (cyp9) of Schizosaccharomyces pombe (strain 972 / ATCC 24843) (Fission yeast).